The following is a 276-amino-acid chain: Microtubule-associated protein RP/EB family member 1A (276 aa).

In terms of domain architecture, Calponin-homology (CH) spans 13–115; sequence FVGRNEILTW…FLQWLKRFCD (103 aa). The segment at 124-172 is disordered; it reads ENYNPVERRSRNGKERSVKGSNKIPKSLQTNNNHPPPNSSSVGLSKASG. The span at 129 to 141 shows a compositional bias: basic and acidic residues; that stretch reads VERRSRNGKERSV. The segment covering 162–172 has biased composition (low complexity); that stretch reads SSSVGLSKASG. Positions 173–243 constitute an EB1 C-terminal domain; that stretch reads PKSAKAAEVQ…LYATDANESA (71 aa). A disordered region spans residues 252 to 276; sequence NQSLGVEDDEAEGNGEQLEEEKTQA. Acidic residues predominate over residues 257–270; it reads VEDDEAEGNGEQLE.

Belongs to the MAPRE family. As to quaternary structure, homodimer and heterodimer with EB1B. Interacts with tobamovirus movement protein. As to expression, highly expressed in guard cells of leaf stomata, pollen grains and pollen tubes. Expressed in young roots.

Its subcellular location is the cytoplasm. It is found in the cytoskeleton. The protein resides in the spindle pole. The protein localises to the phragmoplast. Binds to the plus end of microtubules and regulates the dynamics of the microtubule cytoskeleton. May be involved in anchoring microtubules to their nucleation sites and/or functioning as a reservoir for distribution to the growing end. In plants, microtubule minus ends are not necessarily severed from the nucleation site and transported to the plus end of a microtubule as part of the recycling process. May play a role in endomembrane organization during polarized growth of plant cells. Interacts with the tobamovirus movement protein (MP) and may play a role in the association of MP with the microtubule system during infection. The protein is Microtubule-associated protein RP/EB family member 1A (EB1A) of Arabidopsis thaliana (Mouse-ear cress).